Consider the following 260-residue polypeptide: Deoxyribonuclease-1 (260 aa).

An N-linked (GlcNAc...) asparagine glycan is attached at asparagine 18. Glutamate 78 is an active-site residue. The cysteines at positions 101 and 104 are disulfide-linked. The active site involves histidine 134. A disulfide bridge links cysteine 173 with cysteine 209.

Belongs to the DNase I family. Requires Ca(2+) as cofactor. The cofactor is Mg(2+).

It is found in the secreted. The protein resides in the zymogen granule. Its subcellular location is the nucleus envelope. The catalysed reaction is Endonucleolytic cleavage to 5'-phosphodinucleotide and 5'-phosphooligonucleotide end-products.. In terms of biological role, serum endocuclease secreted into body fluids by a wide variety of exocrine and endocrine organs. Expressed by non-hematopoietic tissues and preferentially cleaves protein-free DNA. Among other functions, seems to be involved in cell death by apoptosis. Binds specifically to G-actin and blocks actin polymerization. Together with DNASE1L3, plays a key role in degrading neutrophil extracellular traps (NETs). NETs are mainly composed of DNA fibers and are released by neutrophils to bind pathogens during inflammation. Degradation of intravascular NETs by DNASE1 and DNASE1L3 is required to prevent formation of clots that obstruct blood vessels and cause organ damage following inflammation. The sequence is that of Deoxyribonuclease-1 (DNASE1) from Ovis aries (Sheep).